A 251-amino-acid polypeptide reads, in one-letter code: uncharacterized protein (251 aa).

12–21 (TGASSQGDIG) is a binding site for NADP(+). Position 148 (Ser-148) interacts with substrate. The Proton acceptor role is filled by Tyr-161.

This sequence belongs to the short-chain dehydrogenases/reductases (SDR) family.

This is an uncharacterized protein from Bacillus subtilis (strain 168).